A 316-amino-acid chain; its full sequence is tRNA dimethylallyltransferase (316 aa).

An ATP-binding site is contributed by 17-24 (GPTASGKT). 19–24 (TASGKT) provides a ligand contact to substrate. Interaction with substrate tRNA stretches follow at residues 42 to 45 (DSAL), 166 to 170 (QRLSR), and 247 to 252 (RCVGYR).

The protein belongs to the IPP transferase family. Monomer. Mg(2+) is required as a cofactor.

The enzyme catalyses adenosine(37) in tRNA + dimethylallyl diphosphate = N(6)-dimethylallyladenosine(37) in tRNA + diphosphate. Functionally, catalyzes the transfer of a dimethylallyl group onto the adenine at position 37 in tRNAs that read codons beginning with uridine, leading to the formation of N6-(dimethylallyl)adenosine (i(6)A). This Erwinia tasmaniensis (strain DSM 17950 / CFBP 7177 / CIP 109463 / NCPPB 4357 / Et1/99) protein is tRNA dimethylallyltransferase.